The chain runs to 186 residues: Large ribosomal subunit protein uL22 (186 aa).

Ser158 carries the phosphoserine modification. The interval 159–186 (KATDDEPAKKKLSKKKLQRQKEKMLRSE) is disordered. The residue at position 161 (Thr161) is a Phosphothreonine. Basic and acidic residues predominate over residues 177-186 (RQKEKMLRSE).

The protein belongs to the universal ribosomal protein uL22 family.

The chain is Large ribosomal subunit protein uL22 (RpL17) from Drosophila melanogaster (Fruit fly).